We begin with the raw amino-acid sequence, 95 residues long: Aspartyl/glutamyl-tRNA(Asn/Gln) amidotransferase subunit C (95 aa).

This sequence belongs to the GatC family. Heterotrimer of A, B and C subunits.

The catalysed reaction is L-glutamyl-tRNA(Gln) + L-glutamine + ATP + H2O = L-glutaminyl-tRNA(Gln) + L-glutamate + ADP + phosphate + H(+). It catalyses the reaction L-aspartyl-tRNA(Asn) + L-glutamine + ATP + H2O = L-asparaginyl-tRNA(Asn) + L-glutamate + ADP + phosphate + 2 H(+). Functionally, allows the formation of correctly charged Asn-tRNA(Asn) or Gln-tRNA(Gln) through the transamidation of misacylated Asp-tRNA(Asn) or Glu-tRNA(Gln) in organisms which lack either or both of asparaginyl-tRNA or glutaminyl-tRNA synthetases. The reaction takes place in the presence of glutamine and ATP through an activated phospho-Asp-tRNA(Asn) or phospho-Glu-tRNA(Gln). The protein is Aspartyl/glutamyl-tRNA(Asn/Gln) amidotransferase subunit C of Anaeromyxobacter sp. (strain Fw109-5).